The sequence spans 347 residues: Malate dehydrogenase, mitochondrial (347 aa).

A mitochondrion-targeting transit peptide spans 1–27 (MKASILRSVRSAVSRSSSSNRLLSRSF). NAD(+) is bound by residues 41-47 (GAAGGIG) and Asp67. 2 residues coordinate substrate: Arg114 and Arg120. NAD(+) contacts are provided by residues Asn127 and 150–152 (ISN). Substrate-binding residues include Asn152 and Arg186. Residue His210 is the Proton acceptor of the active site. Met261 contacts NAD(+).

Belongs to the LDH/MDH superfamily. MDH type 1 family. In terms of assembly, homodimer.

The protein resides in the mitochondrion matrix. The enzyme catalyses (S)-malate + NAD(+) = oxaloacetate + NADH + H(+). This chain is Malate dehydrogenase, mitochondrial (MMDH), found in Citrullus lanatus (Watermelon).